The following is a 274-amino-acid chain: Mitochondrial outer membrane protein porin 3 (274 aa).

A Phosphoserine modification is found at serine 76.

It belongs to the eukaryotic mitochondrial porin (TC 1.B.8.1) family. Interacts with KIN14F/KP1. Interacts with FBA6 and GAPC1. As to expression, expressed in leaf tips, anthers and stigma.

The protein resides in the cell membrane. The protein localises to the mitochondrion outer membrane. Its function is as follows. Forms a channel through the mitochondrial outer membrane that allows diffusion of small hydrophilic molecules. The channel adopts an open conformation at low or zero membrane potential and a closed conformation at potentials above 30-40 mV. The open state has a weak anion selectivity whereas the closed state is cation-selective. This Arabidopsis thaliana (Mouse-ear cress) protein is Mitochondrial outer membrane protein porin 3 (VDAC3).